The sequence spans 95 residues: ESAT-6-like protein EsxA (95 aa).

It belongs to the WXG100 family. ESAT-6 subfamily. In terms of assembly, forms a tight 1:1 complex with EsxB. An artificial EsxA-EsxB heterodimer interacts with EspA.

It is found in the secreted. In terms of biological role, an exported protein. Unlike its M.tuberculosis counterpart has poor pore forming ability in artificial liposomes, does not undergo conformational change at acidic pH. Mutation of 2 residues to those found in M.tuberculosis (25-TA-26 to IH) alters the properties of this protein so that it inserts into liposomes at acidic pH, forming pores, like its M.tuberculosis counterpart. The chain is ESAT-6-like protein EsxA from Mycolicibacterium smegmatis (strain ATCC 700084 / mc(2)155) (Mycobacterium smegmatis).